A 68-amino-acid polypeptide reads, in one-letter code: MIYQPRQTIWVSQKVFPTSQGDGGFLKGCLPISKEVNRKKESEVEGACWAPVNGDGHHFTKINYLYTF.

In Gallus gallus (Chicken), this protein is Neuronal regeneration-related protein (NREP).